A 238-amino-acid chain; its full sequence is NAD-dependent protein deacylase (238 aa).

One can recognise a Deacetylase sirtuin-type domain in the interval 1-237 (MRGIMKVFVL…PAWVERLLAR (237 aa)). Position 12-31 (12-31 (GAGVSAESGLGTFRDKDGVW)) interacts with NAD(+). Substrate-binding residues include tyrosine 56 and arginine 59. 94–97 (QNVD) lines the NAD(+) pocket. The Proton acceptor role is filled by histidine 112. Residues cysteine 120, cysteine 123, cysteine 139, and cysteine 142 each coordinate Zn(2+). NAD(+)-binding positions include 179–181 (GTS), 205–207 (NLE), and alanine 223.

It belongs to the sirtuin family. Class III subfamily. Zn(2+) serves as cofactor.

It localises to the cytoplasm. It carries out the reaction N(6)-acetyl-L-lysyl-[protein] + NAD(+) + H2O = 2''-O-acetyl-ADP-D-ribose + nicotinamide + L-lysyl-[protein]. It catalyses the reaction N(6)-succinyl-L-lysyl-[protein] + NAD(+) + H2O = 2''-O-succinyl-ADP-D-ribose + nicotinamide + L-lysyl-[protein]. NAD-dependent lysine deacetylase and desuccinylase that specifically removes acetyl and succinyl groups on target proteins. Modulates the activities of several proteins which are inactive in their acylated form. The protein is NAD-dependent protein deacylase of Caulobacter vibrioides (strain ATCC 19089 / CIP 103742 / CB 15) (Caulobacter crescentus).